Consider the following 195-residue polypeptide: GTP-dependent dephospho-CoA kinase (195 aa).

GTP-binding residues include Asp-49, Val-50, Asp-68, Glu-127, and Asp-150.

It belongs to the GTP-dependent DPCK family.

The catalysed reaction is 3'-dephospho-CoA + GTP = GDP + CoA + H(+). Its pathway is cofactor biosynthesis; coenzyme A biosynthesis. Its function is as follows. Catalyzes the GTP-dependent phosphorylation of the 3'-hydroxyl group of dephosphocoenzyme A to form coenzyme A (CoA). This chain is GTP-dependent dephospho-CoA kinase, found in Methanosarcina mazei (strain ATCC BAA-159 / DSM 3647 / Goe1 / Go1 / JCM 11833 / OCM 88) (Methanosarcina frisia).